The primary structure comprises 849 residues: Ribosome biogenesis protein ERB1 (849 aa).

A disordered region spans residues 1–130 (MARNSIKKSP…PKDDDLSRIN (130 aa)). Composition is skewed to acidic residues over residues 29–44 (EAEE…DELN) and 51–123 (ASDD…EPKD). Residues 286 to 405 (RFVPSKHEAK…LRQVPGYQDS (120 aa)) form a required for interaction with NOP7 region. A required for interaction with YTM1 region spans residues 405 to 441 (SVRERFERSLDLYLAPRVRHNKLNIDPDSLIPDLPSP). WD repeat units lie at residues 457–496 (GHTG…QVYK) and 505–545 (NNED…FDIE). A compositionally biased stretch (basic and acidic residues) spans 569-581 (KISSQKEEDNKES). Positions 569–619 (KISSQKEEDNKESDNEDEDEEEDNDDDDDDDEPETSSTVEPKKEVAKWYPP) are disordered. Residues 582 to 602 (DNEDEDEEEDNDDDDDDDEPE) are compositionally biased toward acidic residues. 5 WD repeats span residues 633-675 (QCRK…SQSP), 678-716 (KSKG…LLKK), 719-758 (PGVR…TPYK), 762-802 (YHEK…DLMT), and 818-849 (INQI…LWTT).

It belongs to the WD repeat BOP1/ERB1 family. Component of the NOP7 complex, composed of ERB1, NOP7 and YTM1. The complex is held together by ERB1, which interacts with NOP7 via its N-terminal domain and with YTM1 via a high-affinity interaction between the seven-bladed beta-propeller domains of the 2 proteins. The NOP7 complex associates with the 66S pre-ribosome.

The protein localises to the nucleus. It localises to the nucleolus. Its subcellular location is the nucleoplasm. Functionally, component of the NOP7 complex, which is required for maturation of the 25S and 5.8S ribosomal RNAs and formation of the 60S ribosome. The protein is Ribosome biogenesis protein ERB1 of Candida albicans (strain SC5314 / ATCC MYA-2876) (Yeast).